Reading from the N-terminus, the 189-residue chain is Recombination protein RecR (189 aa).

The segment at 48–63 (CQTCFHLSAEPTCEIC) adopts a C4-type zinc-finger fold. The 95-residue stretch at 71–165 (GMLCVVADSR…EVSRIAYGLP (95 aa)) folds into the Toprim domain.

It belongs to the RecR family.

Its function is as follows. May play a role in DNA repair. It seems to be involved in an RecBC-independent recombinational process of DNA repair. It may act with RecF and RecO. This chain is Recombination protein RecR, found in Synechococcus sp. (strain CC9311).